We begin with the raw amino-acid sequence, 394 residues long: Elongation factor Tu (394 aa).

The region spanning 10–204 is the tr-type G domain; it reads KPHINVGTIG…AMDNYIPIPE (195 aa). A G1 region spans residues 19–26; that stretch reads GHVDHGKT. 19-26 contacts GTP; that stretch reads GHVDHGKT. Thr-26 contributes to the Mg(2+) binding site. The segment at 60-64 is G2; the sequence is GITIN. The G3 stretch occupies residues 81-84; sequence DCPG. GTP is bound by residues 81 to 85 and 136 to 139; these read DCPGH and NKVD. Residues 136–139 form a G4 region; that stretch reads NKVD. The G5 stretch occupies residues 174–176; it reads SAL.

Belongs to the TRAFAC class translation factor GTPase superfamily. Classic translation factor GTPase family. EF-Tu/EF-1A subfamily. Monomer.

The protein resides in the cytoplasm. The catalysed reaction is GTP + H2O = GDP + phosphate + H(+). Functionally, GTP hydrolase that promotes the GTP-dependent binding of aminoacyl-tRNA to the A-site of ribosomes during protein biosynthesis. The sequence is that of Elongation factor Tu from Methylacidiphilum infernorum (isolate V4) (Methylokorus infernorum (strain V4)).